A 101-amino-acid chain; its full sequence is Urease subunit beta (101 aa).

The protein belongs to the urease beta subunit family. As to quaternary structure, heterotrimer of UreA (gamma), UreB (beta) and UreC (alpha) subunits. Three heterotrimers associate to form the active enzyme.

Its subcellular location is the cytoplasm. It catalyses the reaction urea + 2 H2O + H(+) = hydrogencarbonate + 2 NH4(+). It functions in the pathway nitrogen metabolism; urea degradation; CO(2) and NH(3) from urea (urease route): step 1/1. The chain is Urease subunit beta from Sinorhizobium fredii (strain NBRC 101917 / NGR234).